A 100-amino-acid chain; its full sequence is Urease subunit gamma (100 aa).

Belongs to the urease gamma subunit family. Heterotrimer of UreA (gamma), UreB (beta) and UreC (alpha) subunits. Three heterotrimers associate to form the active enzyme.

It is found in the cytoplasm. It catalyses the reaction urea + 2 H2O + H(+) = hydrogencarbonate + 2 NH4(+). It participates in nitrogen metabolism; urea degradation; CO(2) and NH(3) from urea (urease route): step 1/1. The sequence is that of Urease subunit gamma from Rhizobium etli (strain ATCC 51251 / DSM 11541 / JCM 21823 / NBRC 15573 / CFN 42).